Reading from the N-terminus, the 244-residue chain is Phosphoadenosine 5'-phosphosulfate reductase (244 aa).

Cys239 (nucleophile; cysteine thiosulfonate intermediate) is an active-site residue.

It belongs to the PAPS reductase family. CysH subfamily.

Its subcellular location is the cytoplasm. The enzyme catalyses [thioredoxin]-disulfide + sulfite + adenosine 3',5'-bisphosphate + 2 H(+) = [thioredoxin]-dithiol + 3'-phosphoadenylyl sulfate. The protein operates within sulfur metabolism; hydrogen sulfide biosynthesis; sulfite from sulfate: step 3/3. Functionally, catalyzes the formation of sulfite from phosphoadenosine 5'-phosphosulfate (PAPS) using thioredoxin as an electron donor. In Yersinia pseudotuberculosis serotype O:1b (strain IP 31758), this protein is Phosphoadenosine 5'-phosphosulfate reductase.